The following is an 876-amino-acid chain: Alanine--tRNA ligase (876 aa).

Residues His-564, His-568, Cys-666, and His-670 each coordinate Zn(2+).

This sequence belongs to the class-II aminoacyl-tRNA synthetase family. Requires Zn(2+) as cofactor.

Its subcellular location is the cytoplasm. It catalyses the reaction tRNA(Ala) + L-alanine + ATP = L-alanyl-tRNA(Ala) + AMP + diphosphate. In terms of biological role, catalyzes the attachment of alanine to tRNA(Ala) in a two-step reaction: alanine is first activated by ATP to form Ala-AMP and then transferred to the acceptor end of tRNA(Ala). Also edits incorrectly charged Ser-tRNA(Ala) and Gly-tRNA(Ala) via its editing domain. In Porphyromonas gingivalis (strain ATCC BAA-308 / W83), this protein is Alanine--tRNA ligase.